Consider the following 149-residue polypeptide: Protein Rv2250A (149 aa).

This is Protein Rv2250A from Mycobacterium tuberculosis (strain ATCC 25618 / H37Rv).